We begin with the raw amino-acid sequence, 78 residues long: Acyl carrier protein (78 aa).

In terms of domain architecture, Carrier spans S2–T77. S37 carries the O-(pantetheine 4'-phosphoryl)serine modification.

The protein belongs to the acyl carrier protein (ACP) family. 4'-phosphopantetheine is transferred from CoA to a specific serine of apo-ACP by AcpS. This modification is essential for activity because fatty acids are bound in thioester linkage to the sulfhydryl of the prosthetic group.

Its subcellular location is the cytoplasm. It functions in the pathway lipid metabolism; fatty acid biosynthesis. Functionally, carrier of the growing fatty acid chain in fatty acid biosynthesis. This is Acyl carrier protein from Chelativorans sp. (strain BNC1).